A 224-amino-acid chain; its full sequence is Magnesium-protoporphyrin O-methyltransferase (224 aa).

The protein belongs to the class I-like SAM-binding methyltransferase superfamily. Magnesium protoporphyrin O-methyltransferase family.

The catalysed reaction is Mg-protoporphyrin IX + S-adenosyl-L-methionine = Mg-protoporphyrin IX 13-monomethyl ester + S-adenosyl-L-homocysteine. The protein operates within porphyrin-containing compound metabolism; bacteriochlorophyll biosynthesis (light-independent). Converts Mg-protoporphyrin IX to Mg-protoporphyrin IX methylester using S-adenosyl-L-methionine as a cofactor. In Rhodobacter capsulatus (Rhodopseudomonas capsulata), this protein is Magnesium-protoporphyrin O-methyltransferase (bchM).